Consider the following 252-residue polypeptide: MILYEYPFNERIRTLLRLEDLFDRLDYFLGQEHPLQHHVAITTIFEIIDVAGRADLKTDLIKELERQRQALAPLRSNPQIDQDALVAVITEIEQGIAALSQTVGKAGQLLADNEWLTSIRSRAIIPGGTCEFDLPAYYAWQHRDADDRRADILKWARPLASLRMGAGIVLRLLRESGQSGKVIATGGSYQQMLSGRSYQLMQVYLDESLLAFIPEMSANKYMLWVRFTQQDGDMRPRSVDADIPFLLKLCNF.

This sequence belongs to the ZapD family. As to quaternary structure, interacts with FtsZ.

It is found in the cytoplasm. In terms of biological role, cell division factor that enhances FtsZ-ring assembly. Directly interacts with FtsZ and promotes bundling of FtsZ protofilaments, with a reduction in FtsZ GTPase activity. In Cupriavidus metallidurans (strain ATCC 43123 / DSM 2839 / NBRC 102507 / CH34) (Ralstonia metallidurans), this protein is Cell division protein ZapD.